A 321-amino-acid chain; its full sequence is Phospho-N-acetylmuramoyl-pentapeptide-transferase (321 aa).

Helical transmembrane passes span Met1 to Ile21, Met50 to Val70, Ile76 to Ile96, Phe112 to Val132, Ile140 to Leu160, Gly176 to Leu196, Ala200 to Ile220, Val225 to Met245, Leu250 to Val270, and Val300 to Val320.

Belongs to the glycosyltransferase 4 family. MraY subfamily. Mg(2+) serves as cofactor.

It localises to the cell membrane. The catalysed reaction is UDP-N-acetyl-alpha-D-muramoyl-L-alanyl-gamma-D-glutamyl-L-lysyl-D-alanyl-D-alanine + di-trans,octa-cis-undecaprenyl phosphate = Mur2Ac(oyl-L-Ala-gamma-D-Glu-L-Lys-D-Ala-D-Ala)-di-trans,octa-cis-undecaprenyl diphosphate + UMP. Its pathway is cell wall biogenesis; peptidoglycan biosynthesis. Its function is as follows. Catalyzes the initial step of the lipid cycle reactions in the biosynthesis of the cell wall peptidoglycan: transfers peptidoglycan precursor phospho-MurNAc-pentapeptide from UDP-MurNAc-pentapeptide onto the lipid carrier undecaprenyl phosphate, yielding undecaprenyl-pyrophosphoryl-MurNAc-pentapeptide, known as lipid I. This chain is Phospho-N-acetylmuramoyl-pentapeptide-transferase, found in Staphylococcus aureus (strain bovine RF122 / ET3-1).